Consider the following 230-residue polypeptide: Cytidylate kinase (230 aa).

Residue 16–24 (GPASAGKST) participates in ATP binding.

Belongs to the cytidylate kinase family. Type 1 subfamily.

It is found in the cytoplasm. It carries out the reaction CMP + ATP = CDP + ADP. The catalysed reaction is dCMP + ATP = dCDP + ADP. This Lactobacillus johnsonii (strain CNCM I-12250 / La1 / NCC 533) protein is Cytidylate kinase.